The primary structure comprises 218 residues: Small ribosomal subunit protein uS5 (218 aa).

A disordered region spans residues 1–45; the sequence is MPGRQRRDGGNGPAGQNSNGPEGRDNRRGGGDRRGGGDRRDNAAE. Positions 22-45 are enriched in basic and acidic residues; it reads EGRDNRRGGGDRRGGGDRRDNAAE. The 64-residue stretch at 48 to 111 folds into the S5 DRBM domain; it reads QLERVVAINR…EEARKGFFRV (64 aa).

Belongs to the universal ribosomal protein uS5 family. In terms of assembly, part of the 30S ribosomal subunit. Contacts proteins S4 and S8.

Functionally, with S4 and S12 plays an important role in translational accuracy. Its function is as follows. Located at the back of the 30S subunit body where it stabilizes the conformation of the head with respect to the body. In Nocardia farcinica (strain IFM 10152), this protein is Small ribosomal subunit protein uS5.